The sequence spans 467 residues: Chromosomal replication initiator protein DnaA (467 aa).

A domain I, interacts with DnaA modulators region spans residues 1 to 90 (MSLSLWQQCL…KPVTQTPQAA (90 aa)). The segment at 91–130 (VTSNVAAPALVAQTQPQRAAPSTRSGWDNVPAPAEPTYRS) is domain II. Residues 131-347 (NVNVKHTFDN…GALNRVIANA (217 aa)) are domain III, AAA+ region. The ATP site is built by Gly175, Gly177, Lys178, and Thr179. The segment at 348–467 (NFTGRAITID…FSNLIRTLSS (120 aa)) is domain IV, binds dsDNA.

It belongs to the DnaA family. As to quaternary structure, oligomerizes as a right-handed, spiral filament on DNA at oriC.

The protein localises to the cytoplasm. Its function is as follows. Plays an essential role in the initiation and regulation of chromosomal replication. ATP-DnaA binds to the origin of replication (oriC) to initiate formation of the DNA replication initiation complex once per cell cycle. Binds the DnaA box (a 9 base pair repeat at the origin) and separates the double-stranded (ds)DNA. Forms a right-handed helical filament on oriC DNA; dsDNA binds to the exterior of the filament while single-stranded (ss)DNA is stabiized in the filament's interior. The ATP-DnaA-oriC complex binds and stabilizes one strand of the AT-rich DNA unwinding element (DUE), permitting loading of DNA polymerase. After initiation quickly degrades to an ADP-DnaA complex that is not apt for DNA replication. Binds acidic phospholipids. The protein is Chromosomal replication initiator protein DnaA of Shigella dysenteriae serotype 1 (strain Sd197).